The sequence spans 304 residues: ATP phosphoribosyltransferase (304 aa).

The protein belongs to the ATP phosphoribosyltransferase family. Long subfamily. It depends on Mg(2+) as a cofactor.

The protein resides in the cytoplasm. The enzyme catalyses 1-(5-phospho-beta-D-ribosyl)-ATP + diphosphate = 5-phospho-alpha-D-ribose 1-diphosphate + ATP. It functions in the pathway amino-acid biosynthesis; L-histidine biosynthesis; L-histidine from 5-phospho-alpha-D-ribose 1-diphosphate: step 1/9. With respect to regulation, feedback inhibited by histidine. Functionally, catalyzes the condensation of ATP and 5-phosphoribose 1-diphosphate to form N'-(5'-phosphoribosyl)-ATP (PR-ATP). Has a crucial role in the pathway because the rate of histidine biosynthesis seems to be controlled primarily by regulation of HisG enzymatic activity. This chain is ATP phosphoribosyltransferase, found in Xanthomonas campestris pv. campestris (strain 8004).